The chain runs to 414 residues: Gamma-glutamyl phosphate reductase (414 aa).

The protein belongs to the gamma-glutamyl phosphate reductase family.

It is found in the cytoplasm. The catalysed reaction is L-glutamate 5-semialdehyde + phosphate + NADP(+) = L-glutamyl 5-phosphate + NADPH + H(+). It functions in the pathway amino-acid biosynthesis; L-proline biosynthesis; L-glutamate 5-semialdehyde from L-glutamate: step 2/2. Its function is as follows. Catalyzes the NADPH-dependent reduction of L-glutamate 5-phosphate into L-glutamate 5-semialdehyde and phosphate. The product spontaneously undergoes cyclization to form 1-pyrroline-5-carboxylate. The sequence is that of Gamma-glutamyl phosphate reductase from Alkaliphilus metalliredigens (strain QYMF).